A 1405-amino-acid polypeptide reads, in one-letter code: MKDLLRFLKTNNKIEEFDTIKISLASPEIVRSWSFGEIKKPETINYRTFKPERDGLFCARIFGPVKDYECLCGKYKRLKHRGVICEKCGVEVTQTKVRRERMGHIELASPTAHIWFLKSLPSRIGLLLDMPLRDIERVLYFESYVVTDGGMTSLNQRQILTEEQYLDSLEEFGDEFDAKMGAEAIQEILKNMNLKETCNNIRKELIDTNSETKRKKLTKRVKLIESFIKSGNKPEWMILTVLPVLPPDLRPLVPLDGGRFATSDLNDLYRRVINRNNRLKRLLDLAAPDIIVRNEKRMLQEAVDALLDNGRRGRAITGSNKRPLKSLADMIKGKQGRFRQNLLGKRVDYSGRSVITVGPYLRLHQCGLPKKMALELFKPFIYGKLEINGFATTIKAAKKMVEREESVVWDILEEVIKEHPVMLNRAPTLHRLGIQAFEPILIEGKAIQLHPLVCAAYNADFDGDQMAVHVPLTLEAQLEARALMMSTNNILSPANGEPIIVPSQDVVLGLYYMTRDRINCLGEGMCLSNPKEAEHLYRSGIAELHAKVKVRISEYNILENKNIVKSVKLIDTTIGRSILWMIVPKGLPFSLVNRVLGKKSISNMLNTCYRVLGLKPTVMFADNIMYTGFSYAAKSGSSVGIDDILIPLKKSKIIKNAEYEVSEIQEQFQSGLVTAGERYNKVIDIWASANERVAKAMMKNLSVETIIDGNGKENKQSSFNNIFMMADSGARGSAAQIRQLAGMRGLMAKPDGSIIETPITANFREGLNVLQYFISTHGARKGLADTALKTANSGYLTRRLVDVAQDLVVTEDDCKTIFGITMTPVIEGGEVKEPLRERVLGRVVAENVMNPGTDTVLVHRNTLLSEKWCNFLEKNLIDKIKVRSVVTCETNFGVCAKCYGRDLARGHLVNKGEAIGVIAAQSIGEPGTQLTMRTFHIGGAASRLASESNIQVKNKGIVKLNNAKFVINENNKIVITSRHASLKIIDEFGRTKEKYKLPYGAFVNKKNGETITSGEVIANWDPHTMPIITEVSGYIRFIDIIENQTITRQTDELTGVSFISVLDTSERIGINKDLRPALKIINLQGKDVFLPGTDIPAQYFLPGKSILQLENGTKINSGDVLARLSLETSGIKDITGGLPRVADLFEARRPKEPAILAEISGIISFGKETKGKRRLVISPINGSDVYEEMIPKWRHLNVFEGERVEKGDVISDGPESPHDILRLRGVHAVTKYIVNEVQDVYRLQGVKINDKHIEVIVRQMLKKATILNGSQSEFLEGEQTEFSRIRIANNNTKSSDKINYSRDLLGITKSSLATESFISAASFQETTRVLTESAVSGKIDELRGLKENVIVGRLIPAGTGYSYHQKRLLERKKRNSIHKSSVNHVTLDEASENLKELLKANLNDN.

Cys70, Cys72, Cys85, and Cys88 together coordinate Zn(2+). Mg(2+) is bound by residues Asp460, Asp462, and Asp464. Zn(2+) contacts are provided by Cys814, Cys888, Cys895, and Cys898.

It belongs to the RNA polymerase beta' chain family. As to quaternary structure, the RNAP catalytic core consists of 2 alpha, 1 beta, 1 beta' and 1 omega subunit. When a sigma factor is associated with the core the holoenzyme is formed, which can initiate transcription. Requires Mg(2+) as cofactor. Zn(2+) serves as cofactor.

The enzyme catalyses RNA(n) + a ribonucleoside 5'-triphosphate = RNA(n+1) + diphosphate. DNA-dependent RNA polymerase catalyzes the transcription of DNA into RNA using the four ribonucleoside triphosphates as substrates. The polypeptide is DNA-directed RNA polymerase subunit beta' (Wigglesworthia glossinidia brevipalpis).